Reading from the N-terminus, the 310-residue chain is tRNA dimethylallyltransferase (310 aa).

Gly14–Ser21 contacts ATP. A substrate-binding site is contributed by Thr16 to Ser21. Interaction with substrate tRNA stretches follow at residues Asp39 to Gln42 and Gln163 to Arg167.

This sequence belongs to the IPP transferase family. In terms of assembly, monomer. Requires Mg(2+) as cofactor.

It catalyses the reaction adenosine(37) in tRNA + dimethylallyl diphosphate = N(6)-dimethylallyladenosine(37) in tRNA + diphosphate. Functionally, catalyzes the transfer of a dimethylallyl group onto the adenine at position 37 in tRNAs that read codons beginning with uridine, leading to the formation of N6-(dimethylallyl)adenosine (i(6)A). This Brucella abortus (strain S19) protein is tRNA dimethylallyltransferase.